The chain runs to 235 residues: MLDLFGASSAPTFGNQGKFTTDPVTGALIPVVVEQSSRGERSFDIYSRLLRERIIFVTGEVEDHMASVIIAQLLFLESENPSKDISMYINSPGGVVTAGLAIYDTMQYIRPRVSTVCIGQAASMGSFLLAAGEPGMRIALPNARIMIHQPSGGARGMASDIEIQAREILRIRKRMNDLYVKFTGRSLDEIEKAMDRDTFLEAEEAMKFGLVDKVFESRPATDSVGEGEGSGGAPA.

The active-site Nucleophile is S123. H148 is an active-site residue.

Belongs to the peptidase S14 family. Fourteen ClpP subunits assemble into 2 heptameric rings which stack back to back to give a disk-like structure with a central cavity, resembling the structure of eukaryotic proteasomes.

The protein resides in the cytoplasm. The enzyme catalyses Hydrolysis of proteins to small peptides in the presence of ATP and magnesium. alpha-casein is the usual test substrate. In the absence of ATP, only oligopeptides shorter than five residues are hydrolyzed (such as succinyl-Leu-Tyr-|-NHMec, and Leu-Tyr-Leu-|-Tyr-Trp, in which cleavage of the -Tyr-|-Leu- and -Tyr-|-Trp bonds also occurs).. Its function is as follows. Cleaves peptides in various proteins in a process that requires ATP hydrolysis. Has a chymotrypsin-like activity. Plays a major role in the degradation of misfolded proteins. The sequence is that of ATP-dependent Clp protease proteolytic subunit from Novosphingobium aromaticivorans (strain ATCC 700278 / DSM 12444 / CCUG 56034 / CIP 105152 / NBRC 16084 / F199).